The chain runs to 194 residues: dTTP/UTP pyrophosphatase (194 aa).

The Proton acceptor role is filled by Asp-69.

The protein belongs to the Maf family. YhdE subfamily. Requires a divalent metal cation as cofactor.

It is found in the cytoplasm. It catalyses the reaction dTTP + H2O = dTMP + diphosphate + H(+). The catalysed reaction is UTP + H2O = UMP + diphosphate + H(+). Functionally, nucleoside triphosphate pyrophosphatase that hydrolyzes dTTP and UTP. May have a dual role in cell division arrest and in preventing the incorporation of modified nucleotides into cellular nucleic acids. In Moorella thermoacetica (strain ATCC 39073 / JCM 9320), this protein is dTTP/UTP pyrophosphatase.